Consider the following 80-residue polypeptide: Large ribosomal subunit protein uL24 (80 aa).

The protein belongs to the universal ribosomal protein uL24 family. Part of the 50S ribosomal subunit.

Its function is as follows. One of two assembly initiator proteins, it binds directly to the 5'-end of the 23S rRNA, where it nucleates assembly of the 50S subunit. One of the proteins that surrounds the polypeptide exit tunnel on the outside of the subunit. This chain is Large ribosomal subunit protein uL24, found in Chlorobium phaeobacteroides (strain DSM 266 / SMG 266 / 2430).